Reading from the N-terminus, the 251-residue chain is MKKAGLLFLVMIVIAVVAAGIGYWKLTGEESDTLRKIVLEECLPNQQQNQNPSPCAEVKPNAGYVVLKDLNGPLQYLLMPTYRINGTESPLLTDPSTPNFFWLAWQARDFMSKKYGQPVPDRAVSLAINSRTGRTQNHFHIHISCIRPDVREQLDNNLANISSRWLPLPGGLRGHEYLARRVTESELVQRSPFMMLAEEVPEAREHMGSYGLAMVRQSDNSFVLLATQRNLLTLNRASAEEIQDHQCEILR.

A helical membrane pass occupies residues 4–24; sequence AGLLFLVMIVIAVVAAGIGYW.

Belongs to the Cdh family.

The protein localises to the cell inner membrane. It carries out the reaction a CDP-1,2-diacyl-sn-glycerol + H2O = a 1,2-diacyl-sn-glycero-3-phosphate + CMP + 2 H(+). The protein operates within phospholipid metabolism; CDP-diacylglycerol degradation; phosphatidate from CDP-diacylglycerol: step 1/1. The chain is CDP-diacylglycerol pyrophosphatase from Shigella boydii serotype 4 (strain Sb227).